Here is a 185-residue protein sequence, read N- to C-terminus: uncharacterized protein (185 aa).

Transmembrane regions (helical) follow at residues 4-24 (TYLTGYFPLIAILLFSSSLSI), 54-74 (LALFAAFALLYFMVLSALKLI), 98-118 (LRMGSMIYLGGGILSFVLLQN), 119-139 (VIWIVIWFAVVTLAYFVFTVY), and 153-173 (FILLELLFWFTFVIGILFIFI).

The protein resides in the cell membrane. This is an uncharacterized protein from Bacillus subtilis (strain 168).